Here is a 416-residue protein sequence, read N- to C-terminus: Transcription factor caaR (416 aa).

Residues 13-44 (CDRCYAQKLRCPRPSTNDDASCIRCLRQKVQC) constitute a DNA-binding region (zn(2)-C6 fungal-type). 2 disordered regions span residues 68-90 (ATAGAPPITTTTTTAAPSSSDTA) and 130-150 (QPPPLDTTPPPRSLSASGLDN). Residues 130–141 (QPPPLDTTPPPR) are compositionally biased toward pro residues. The next 2 helical transmembrane spans lie at 249 to 269 (VIYHFTIACYSLLLLIYATLL) and 302 to 322 (SAPSLVELRLVLLFHMITYFL).

The protein localises to the membrane. It localises to the nucleus. Its function is as follows. Transcription factor that positively regulates the expression of the gene cluster that mediates the biosynthesis of the acyltetronic acid derivatives carlosic acid, agglomerin F and carlosic acid methyl ether. This Aspergillus niger (strain ATCC MYA-4892 / CBS 513.88 / FGSC A1513) protein is Transcription factor caaR.